The sequence spans 944 residues: UvrABC system protein A (944 aa).

31–38 (GLSGSGKS) provides a ligand contact to ATP. Residues 253-280 (CPVCGHAISELEPKLFSFNNPAGACPTC) form a C4-type zinc finger. 2 consecutive ABC transporter domains span residues 309–586 (WDRR…PDSL) and 606–936 (RNKK…HYLK). 639–646 (GVSGSGKS) is an ATP binding site. Residues 739-765 (CEACQGDGLIKVEMHFLPDIYVPCDVC) form a C4-type zinc finger.

Belongs to the ABC transporter superfamily. UvrA family. In terms of assembly, forms a heterotetramer with UvrB during the search for lesions.

The protein localises to the cytoplasm. Its function is as follows. The UvrABC repair system catalyzes the recognition and processing of DNA lesions. UvrA is an ATPase and a DNA-binding protein. A damage recognition complex composed of 2 UvrA and 2 UvrB subunits scans DNA for abnormalities. When the presence of a lesion has been verified by UvrB, the UvrA molecules dissociate. This is UvrABC system protein A from Pseudomonas putida (strain ATCC 47054 / DSM 6125 / CFBP 8728 / NCIMB 11950 / KT2440).